A 180-amino-acid chain; its full sequence is MGLTVSAIFSRIFGKKQMRILMVGLDAAGKTTILYKLKLGEIVTTIPTIGFNVETVEYKNICFTVWDVGGQDKIRPLWRHYFQNTQGLIFVVDSNDRERVQESAEELQKMLQEDELRDAVLLVFANKQDMPNAMVVSELTDKLGLQALRSRTWYVQATCATQGTGLYDGLDWLSHELSKR.

A lipid anchor (N-myristoyl glycine) is attached at Gly2. Residues 24 to 31 (GLDAAGKT), 67 to 71 (DVGGQ), and 126 to 129 (NKQD) each bind GTP.

This sequence belongs to the small GTPase superfamily. Arf family.

It localises to the golgi apparatus. Functionally, GTP-binding protein involved in protein trafficking; may modulate vesicle budding and uncoating within the Golgi apparatus. This is ADP-ribosylation factor 5 (ARF5) from Gallus gallus (Chicken).